A 173-amino-acid chain; its full sequence is Large ribosomal subunit protein uL10 (173 aa).

The protein belongs to the universal ribosomal protein uL10 family. In terms of assembly, part of the ribosomal stalk of the 50S ribosomal subunit. The N-terminus interacts with L11 and the large rRNA to form the base of the stalk. The C-terminus forms an elongated spine to which L12 dimers bind in a sequential fashion forming a multimeric L10(L12)X complex.

Its function is as follows. Forms part of the ribosomal stalk, playing a central role in the interaction of the ribosome with GTP-bound translation factors. The protein is Large ribosomal subunit protein uL10 of Chlorobaculum parvum (strain DSM 263 / NCIMB 8327) (Chlorobium vibrioforme subsp. thiosulfatophilum).